The following is a 292-amino-acid chain: UPF0761 membrane protein Ping_3482 (292 aa).

6 helical membrane passes run 43–63, 100–120, 139–159, 179–199, 209–229, and 243–263; these read LLSI…FPVF, MSMM…STID, FTIY…SLAL, LLSL…YTLV, ALIG…LFRL, and ALAV…IVLI.

Belongs to the UPF0761 family.

The protein resides in the cell inner membrane. The polypeptide is UPF0761 membrane protein Ping_3482 (Psychromonas ingrahamii (strain DSM 17664 / CCUG 51855 / 37)).